The following is a 335-amino-acid chain: tRNA N6-adenosine threonylcarbamoyltransferase (335 aa).

His110 and His114 together coordinate Fe cation. Substrate-binding positions include 132–136, Asp165, Gly178, and Asn271; that span reads LVSGG. Position 299 (Asp299) interacts with Fe cation.

It belongs to the KAE1 / TsaD family. It depends on Fe(2+) as a cofactor.

The protein localises to the cytoplasm. It catalyses the reaction L-threonylcarbamoyladenylate + adenosine(37) in tRNA = N(6)-L-threonylcarbamoyladenosine(37) in tRNA + AMP + H(+). Its function is as follows. Required for the formation of a threonylcarbamoyl group on adenosine at position 37 (t(6)A37) in tRNAs that read codons beginning with adenine. Is involved in the transfer of the threonylcarbamoyl moiety of threonylcarbamoyl-AMP (TC-AMP) to the N6 group of A37, together with TsaE and TsaB. TsaD likely plays a direct catalytic role in this reaction. The sequence is that of tRNA N6-adenosine threonylcarbamoyltransferase from Campylobacter jejuni subsp. jejuni serotype O:2 (strain ATCC 700819 / NCTC 11168).